The primary structure comprises 1149 residues: Protogenin A (1149 aa).

Positions 1–23 (MASFKRDLYLFLAVFLSISGVWS) are cleaved as a signal peptide. The Extracellular segment spans residues 24 to 932 (FSELFFIKEP…GFYHLDQRSM (909 aa)). Ig-like domains follow at residues 27-117 (LFFI…ARLT), 122-209 (STFT…ATLT), 222-309 (PRII…ANIT), and 314-399 (PSLV…RLIV). Disulfide bonds link Cys-48/Cys-100 and Cys-143/Cys-192. Asn-78 carries N-linked (GlcNAc...) asparagine glycosylation. N-linked (GlcNAc...) asparagine glycosylation is present at Asn-230. Cys-243 and Cys-291 are oxidised to a cystine. Residues Asn-300 and Asn-307 are each glycosylated (N-linked (GlcNAc...) asparagine). Cys-335 and Cys-382 are disulfide-bonded. Fibronectin type-III domains follow at residues 408–502 (APRN…TLED), 504–600 (PLRA…TPKA), 605–704 (VPLA…VRDR), 711–804 (PPHH…TLPE), and 809–905 (APVG…IHTD). N-linked (GlcNAc...) asparagine glycans are attached at residues Asn-460 and Asn-475. Asn-617 carries N-linked (GlcNAc...) asparagine glycosylation. Residues 646–666 (GQSEAAQAQIPPHHRQHTIGG) are disordered. N-linked (GlcNAc...) asparagine glycosylation is found at Asn-720, Asn-741, and Asn-753. The chain crosses the membrane as a helical span at residues 933–953 (AGIAVGVCIALTCIIICILIL). Residues 954–1149 (ACRSKTRKSC…EQEMTDLHPV (196 aa)) are Cytoplasmic-facing. Residues 1060 to 1149 (YTETSPENPP…EQEMTDLHPV (90 aa)) form a disordered region. Residues 1061–1073 (TETSPENPPTTLQ) are compositionally biased toward polar residues. Over residues 1084–1106 (EGSHSSEGSHETSDSGRYSHDDT) the composition is skewed to basic and acidic residues.

Belongs to the immunoglobulin superfamily. DCC family. As to expression, expression begins in the posterior region of the embryo and this posterior restriction persists at the 4 s stage. At early somite stages, expressed along the neural tube with lower levels in the lateral and paraxial mesoderm. Expression decreases caudally and rostrally becomes restricted to the ventral part of the brain. Widespread in the spinal cord at 30 hours post-fertilization (hpf) and is also expressed in the lens from this time. At 40 hpf, expression is restricted to the lens.

Its subcellular location is the membrane. In terms of biological role, may play a role in anteroposterior axis elongation. The chain is Protogenin A from Danio rerio (Zebrafish).